Consider the following 331-residue polypeptide: Putative peptidyl-prolyl cis-trans isomerase RC0542 (331 aa).

A disordered region spans residues 33–54; the sequence is EQTASNNSSTDENQTSINNEPP. The PPIase FKBP-type domain occupies 128-226; sequence GHVVTVFYQI…SNEVKIYDDE (99 aa).

The enzyme catalyses [protein]-peptidylproline (omega=180) = [protein]-peptidylproline (omega=0). The polypeptide is Putative peptidyl-prolyl cis-trans isomerase RC0542 (Rickettsia conorii (strain ATCC VR-613 / Malish 7)).